The chain runs to 822 residues: Glycerol-3-phosphate acyltransferase (822 aa).

Residues 306-311 carry the HXXXXD motif motif; sequence CHRSHM. The tract at residues 803-822 is disordered; that stretch reads ASSSAEMEAESQAVEETTQE.

It belongs to the GPAT/DAPAT family.

It is found in the cell inner membrane. It carries out the reaction sn-glycerol 3-phosphate + an acyl-CoA = a 1-acyl-sn-glycero-3-phosphate + CoA. Its pathway is phospholipid metabolism; CDP-diacylglycerol biosynthesis; CDP-diacylglycerol from sn-glycerol 3-phosphate: step 1/3. The protein is Glycerol-3-phosphate acyltransferase of Pectobacterium carotovorum subsp. carotovorum (strain PC1).